The sequence spans 467 residues: MSIQTQDSQETLKSLSLIAAHSHISGLGLDENLQPKPSSQGMVGQLQARRAAGVILKMVQNGSIAGRAVLVAGPPSTGKTALAMGLSQSLGKDVPFTAIAGSEIFSLELSKTEALTQAFRKSIGIKIKEETELIEGEVVEIQIDRSITGGHKQGKLTIKTTDMETIYELGNKMIEGLTKEKVLAGDVISIDKASGKITKLGRSFARSRDYDAMGADTKFVQCPEGELQKRKTVVHTVSLHEIDVINSRTQGFLALFTGDTGEIRSEVRDQINTKVAEWKEEGKAEIVPGVLFIDEVHMLDIECFSFINRALEDEFAPIVIMATNRGISKTRGTNYKSPHGLPLDLLDRSIIITTKNYDASEIKTILTIRSTEEEVELSPEALDLLTNIGSETSLRYSSNLISVSQQIAQKRKSNTVEVKDVERAYLLFLDSARSVKFVQEFESQYIDDKGQVNISIGKDEDAMDTTA.

73–80 (GPPSTGKT) provides a ligand contact to ATP.

It belongs to the RuvB family. In terms of assembly, may form heterododecamers with RVB1. Component of the SWR1 chromatin remodeling complex, the INO80 chromatin remodeling complex, and of the R2TP complex.

The protein resides in the nucleus. It catalyses the reaction ATP + H2O = ADP + phosphate + H(+). Its function is as follows. DNA helicase which participates in several chromatin remodeling complexes, including the SWR1 and the INO80 complexes. The SWR1 complex mediates the ATP-dependent exchange of histone H2A for the H2A variant HZT1 leading to transcriptional regulation of selected genes by chromatin remodeling. The INO80 complex remodels chromatin by shifting nucleosomes and is involved in DNA repair. Also involved in pre-rRNA processing. The polypeptide is RuvB-like helicase 2 (RVB2) (Kluyveromyces lactis (strain ATCC 8585 / CBS 2359 / DSM 70799 / NBRC 1267 / NRRL Y-1140 / WM37) (Yeast)).